Here is a 233-residue protein sequence, read N- to C-terminus: Translation initiation factor IF-3 (233 aa).

Disordered regions lie at residues 1-21 (MAIQ…RTNR) and 184-233 (LQSQ…AAQR). Residues 193-211 (AAAAAAPAAAPAAPAAGAP) show a composition bias toward low complexity. A compositionally biased stretch (pro residues) spans 212 to 223 (APAPAPAAPAPA). The segment covering 224 to 233 (PAAADPAAQR) has biased composition (low complexity).

This sequence belongs to the IF-3 family. Monomer.

Its subcellular location is the cytoplasm. Functionally, IF-3 binds to the 30S ribosomal subunit and shifts the equilibrium between 70S ribosomes and their 50S and 30S subunits in favor of the free subunits, thus enhancing the availability of 30S subunits on which protein synthesis initiation begins. The chain is Translation initiation factor IF-3 from Anaeromyxobacter dehalogenans (strain 2CP-C).